A 307-amino-acid polypeptide reads, in one-letter code: Glutathione synthetase (307 aa).

Positions 120–304 constitute an ATP-grasp domain; it reads KLGALRYSHL…VSDKVIEKLL (185 aa). Residue 146–202 coordinates ATP; the sequence is AQINHDVVVKPLGGKGGQGVIRLTKDSPGIKAMIELITSQEQLPVMMQKFIPEVKEG. Mg(2+) contacts are provided by glutamate 275 and asparagine 277.

The protein belongs to the prokaryotic GSH synthase family. Requires Mg(2+) as cofactor. Mn(2+) serves as cofactor.

The enzyme catalyses gamma-L-glutamyl-L-cysteine + glycine + ATP = glutathione + ADP + phosphate + H(+). Its pathway is sulfur metabolism; glutathione biosynthesis; glutathione from L-cysteine and L-glutamate: step 2/2. The polypeptide is Glutathione synthetase (Prochlorococcus marinus subsp. pastoris (strain CCMP1986 / NIES-2087 / MED4)).